Consider the following 150-residue polypeptide: Male-specific protein scotti (150 aa).

The disordered stretch occupies residues 60–84 (PPMAVFPARGGPNGGPPRLRKKRSF). A glycan (N-linked (GlcNAc...) asparagine) is linked at Asn-131.

It belongs to the male-specific scotti family.

Post-meiotically transcribed gene that has a role in late spermiogenesis; required for actin cone progression during spermatid individualization. In Drosophila yakuba (Fruit fly), this protein is Male-specific protein scotti.